Consider the following 155-residue polypeptide: SsrA-binding protein (155 aa).

It belongs to the SmpB family.

It localises to the cytoplasm. In terms of biological role, required for rescue of stalled ribosomes mediated by trans-translation. Binds to transfer-messenger RNA (tmRNA), required for stable association of tmRNA with ribosomes. tmRNA and SmpB together mimic tRNA shape, replacing the anticodon stem-loop with SmpB. tmRNA is encoded by the ssrA gene; the 2 termini fold to resemble tRNA(Ala) and it encodes a 'tag peptide', a short internal open reading frame. During trans-translation Ala-aminoacylated tmRNA acts like a tRNA, entering the A-site of stalled ribosomes, displacing the stalled mRNA. The ribosome then switches to translate the ORF on the tmRNA; the nascent peptide is terminated with the 'tag peptide' encoded by the tmRNA and targeted for degradation. The ribosome is freed to recommence translation, which seems to be the essential function of trans-translation. The protein is SsrA-binding protein of Geobacillus kaustophilus (strain HTA426).